The primary structure comprises 23 residues: Augerpeptide hhe7a (23 aa).

Intrachain disulfides connect C3–C11, C6–C19, and C10–C22.

In terms of tissue distribution, expressed by the venom duct.

Its subcellular location is the secreted. Its function is as follows. Causes abnormal twist followed by immobility when injected into C.elegans. The protein is Augerpeptide hhe7a of Hastula hectica (Sea snail).